Reading from the N-terminus, the 482-residue chain is G patch domain-containing protein 2-like (482 aa).

Phosphoserine is present on residues Ser31, Ser86, and Ser88. Position 91 is a phosphothreonine (Thr91). Disordered regions lie at residues Ser195 to Asp222 and Lys408 to Cys482. The span at Gly198–Asp215 shows a compositional bias: basic and acidic residues. Low complexity predominate over residues Val414–Pro427. Positions Glu468–Cys482 are enriched in polar residues.

The chain is G patch domain-containing protein 2-like (Gpatch2l) from Mus musculus (Mouse).